A 143-amino-acid chain; its full sequence is ATP synthase subunit b' (143 aa).

The helical transmembrane segment at 6 to 26 threads the bilayer; it reads ATLPVMALQFILLAVILNAVF.

It belongs to the ATPase B chain family. As to quaternary structure, F-type ATPases have 2 components, F(1) - the catalytic core - and F(0) - the membrane proton channel. F(1) has five subunits: alpha(3), beta(3), gamma(1), delta(1), epsilon(1). F(0) has four main subunits: a(1), b(1), b'(1) and c(10-14). The alpha and beta chains form an alternating ring which encloses part of the gamma chain. F(1) is attached to F(0) by a central stalk formed by the gamma and epsilon chains, while a peripheral stalk is formed by the delta, b and b' chains.

The protein localises to the cellular thylakoid membrane. Functionally, f(1)F(0) ATP synthase produces ATP from ADP in the presence of a proton or sodium gradient. F-type ATPases consist of two structural domains, F(1) containing the extramembraneous catalytic core and F(0) containing the membrane proton channel, linked together by a central stalk and a peripheral stalk. During catalysis, ATP synthesis in the catalytic domain of F(1) is coupled via a rotary mechanism of the central stalk subunits to proton translocation. Component of the F(0) channel, it forms part of the peripheral stalk, linking F(1) to F(0). The b'-subunit is a diverged and duplicated form of b found in plants and photosynthetic bacteria. The chain is ATP synthase subunit b' from Microcystis aeruginosa (strain NIES-843 / IAM M-2473).